Consider the following 443-residue polypeptide: Tol-Pal system protein TolB (443 aa).

The signal sequence occupies residues 1 to 33 (MKIGIINTKIRTVFSAFACMIAASLVCTMPARA).

It belongs to the TolB family. The Tol-Pal system is composed of five core proteins: the inner membrane proteins TolA, TolQ and TolR, the periplasmic protein TolB and the outer membrane protein Pal. They form a network linking the inner and outer membranes and the peptidoglycan layer.

Its subcellular location is the periplasm. Part of the Tol-Pal system, which plays a role in outer membrane invagination during cell division and is important for maintaining outer membrane integrity. In Brucella anthropi (strain ATCC 49188 / DSM 6882 / CCUG 24695 / JCM 21032 / LMG 3331 / NBRC 15819 / NCTC 12168 / Alc 37) (Ochrobactrum anthropi), this protein is Tol-Pal system protein TolB.